Here is a 122-residue protein sequence, read N- to C-terminus: Large ribosomal subunit protein uL14c (122 aa).

The protein belongs to the universal ribosomal protein uL14 family. As to quaternary structure, part of the 50S ribosomal subunit.

Its subcellular location is the plastid. It is found in the chloroplast. In terms of biological role, binds to 23S rRNA. The protein is Large ribosomal subunit protein uL14c of Carica papaya (Papaya).